A 551-amino-acid chain; its full sequence is Thermophilic beta-amylase (551 aa).

The first 32 residues, 1-32 (MIGAFKRLGQKLFLTLLTASLIFASSIVTANA), serve as a signal peptide directing secretion. Aspartate 73 lines the substrate pocket. Glutamate 80 is a Ca(2+) binding site. The substrate site is built by histidine 113 and aspartate 121. Glutamate 167 is a Ca(2+) binding site. The active-site Proton donor is the glutamate 195. Positions 310, 315, and 353 each coordinate substrate. Residue glutamate 392 is the Proton acceptor of the active site. Substrate is bound by residues 393-394 (NA) and arginine 423. Positions 448 to 551 (LTPNGTIPVT…TGSVTITWQN (104 aa)) constitute a CBM20 domain.

Belongs to the glycosyl hydrolase 14 family. In terms of assembly, monomer. The cofactor is Ca(2+).

It carries out the reaction Hydrolysis of (1-&gt;4)-alpha-D-glucosidic linkages in polysaccharides so as to remove successive maltose units from the non-reducing ends of the chains.. This is Thermophilic beta-amylase from Thermoanaerobacterium thermosulfurigenes (Clostridium thermosulfurogenes).